The primary structure comprises 444 residues: Exodeoxyribonuclease 7 large subunit (444 aa).

The protein belongs to the XseA family. As to quaternary structure, heterooligomer composed of large and small subunits.

The protein localises to the cytoplasm. It carries out the reaction Exonucleolytic cleavage in either 5'- to 3'- or 3'- to 5'-direction to yield nucleoside 5'-phosphates.. Bidirectionally degrades single-stranded DNA into large acid-insoluble oligonucleotides, which are then degraded further into small acid-soluble oligonucleotides. This is Exodeoxyribonuclease 7 large subunit from Rickettsia akari (strain Hartford).